The primary structure comprises 206 residues: Large ribosomal subunit protein uL4 (206 aa).

Residues 47–94 (NRAQKDRSEINKSTKKPFRQKGTGRARAGRASSPLWRGGGKVFPNSPD) are disordered. The span at 49-58 (AQKDRSEINK) shows a compositional bias: basic and acidic residues. Residues 59 to 74 (STKKPFRQKGTGRARA) show a composition bias toward basic residues.

The protein belongs to the universal ribosomal protein uL4 family. Part of the 50S ribosomal subunit.

One of the primary rRNA binding proteins, this protein initially binds near the 5'-end of the 23S rRNA. It is important during the early stages of 50S assembly. It makes multiple contacts with different domains of the 23S rRNA in the assembled 50S subunit and ribosome. In terms of biological role, forms part of the polypeptide exit tunnel. The chain is Large ribosomal subunit protein uL4 from Laribacter hongkongensis (strain HLHK9).